The sequence spans 436 residues: Testis-expressed protein 44 (436 aa).

Composition is skewed to acidic residues over residues 1–10 (MTTEPLEDPE) and 45–54 (LPDEVPPEDI). 2 disordered regions span residues 1-142 (MTTE…LTSL) and 165-307 (AENN…SLYG). Polar residues-rich tracts occupy residues 81 to 103 (ASMQIATSMGQNKDRASMQTDTS) and 167 to 195 (NNRTSRSRTVSPSDSQTQEKTSGKSTVSE). Over residues 234–247 (EPTKSADQEAEDFK) the composition is skewed to basic and acidic residues. Over residues 273 to 289 (QAPPSPNSPADSPPPSP) the composition is skewed to pro residues. S375 carries the post-translational modification Phosphoserine.

It localises to the cytoplasm. This Rattus norvegicus (Rat) protein is Testis-expressed protein 44 (Tex44).